A 354-amino-acid polypeptide reads, in one-letter code: Uroporphyrinogen decarboxylase (354 aa).

Residues 27 to 31, aspartate 77, tyrosine 154, threonine 209, and histidine 327 contribute to the substrate site; that span reads RQAGR.

The protein belongs to the uroporphyrinogen decarboxylase family. Homodimer.

It localises to the cytoplasm. It catalyses the reaction uroporphyrinogen III + 4 H(+) = coproporphyrinogen III + 4 CO2. It participates in porphyrin-containing compound metabolism; protoporphyrin-IX biosynthesis; coproporphyrinogen-III from 5-aminolevulinate: step 4/4. Its function is as follows. Catalyzes the decarboxylation of four acetate groups of uroporphyrinogen-III to yield coproporphyrinogen-III. The sequence is that of Uroporphyrinogen decarboxylase from Pectobacterium atrosepticum (strain SCRI 1043 / ATCC BAA-672) (Erwinia carotovora subsp. atroseptica).